The primary structure comprises 324 residues: Porphobilinogen deaminase (324 aa).

Cys246 carries the S-(dipyrrolylmethanemethyl)cysteine modification. The insert stretch occupies residues 261–279; sequence GQAPEEGGRAAASQAPAAL.

It belongs to the HMBS family. As to quaternary structure, monomer. Dipyrromethane is required as a cofactor.

It catalyses the reaction 4 porphobilinogen + H2O = hydroxymethylbilane + 4 NH4(+). It functions in the pathway porphyrin-containing compound metabolism; protoporphyrin-IX biosynthesis; coproporphyrinogen-III from 5-aminolevulinate: step 2/4. Its function is as follows. Tetrapolymerization of the monopyrrole PBG into the hydroxymethylbilane pre-uroporphyrinogen in several discrete steps. The protein is Porphobilinogen deaminase (hemC) of Paenibacillus macerans (Bacillus macerans).